Reading from the N-terminus, the 1033-residue chain is Ubiquitin carboxyl-terminal hydrolase 48 (1033 aa).

In terms of domain architecture, USP spans Val89–Gln419. Cys98 acts as the Nucleophile in catalysis. His351 serves as the catalytic Proton acceptor. 3 consecutive DUSP domains span residues Gln457 to Cys552, Asn567 to Cys690, and Met710 to Ala823. The segment at Glu610 to Glu639 is disordered. Positions Ala878–Gln920 are disordered. One can recognise a Ubiquitin-like domain in the interval Arg931–Ala1007.

It belongs to the peptidase C19 family.

The protein localises to the cytoplasm. The protein resides in the nucleus. It carries out the reaction Thiol-dependent hydrolysis of ester, thioester, amide, peptide and isopeptide bonds formed by the C-terminal Gly of ubiquitin (a 76-residue protein attached to proteins as an intracellular targeting signal).. Functionally, recognizes and hydrolyzes the peptide bond at the C-terminal Gly of ubiquitin. Involved in the processing of poly-ubiquitin precursors as well as that of ubiquitinated proteins. The polypeptide is Ubiquitin carboxyl-terminal hydrolase 48 (USP48) (Gallus gallus (Chicken)).